Here is a 208-residue protein sequence, read N- to C-terminus: Uracil phosphoribosyltransferase (208 aa).

5-phospho-alpha-D-ribose 1-diphosphate is bound by residues arginine 77, arginine 102, and 129-137 (DPMLATGNS). Residues isoleucine 193 and 198–200 (GDA) each bind uracil. Position 199 (aspartate 199) interacts with 5-phospho-alpha-D-ribose 1-diphosphate.

This sequence belongs to the UPRTase family. Mg(2+) serves as cofactor.

The enzyme catalyses UMP + diphosphate = 5-phospho-alpha-D-ribose 1-diphosphate + uracil. The protein operates within pyrimidine metabolism; UMP biosynthesis via salvage pathway; UMP from uracil: step 1/1. Its activity is regulated as follows. Allosterically activated by GTP. Its function is as follows. Catalyzes the conversion of uracil and 5-phospho-alpha-D-ribose 1-diphosphate (PRPP) to UMP and diphosphate. This is Uracil phosphoribosyltransferase from Mycoplasmopsis agalactiae (strain NCTC 10123 / CIP 59.7 / PG2) (Mycoplasma agalactiae).